Consider the following 311-residue polypeptide: Ribonuclease HIII (311 aa).

The region spanning 93-310 is the RNase H type-2 domain; it reads LSAIGSDEVG…TKKALDIAKH (218 aa). D99, E100, and D204 together coordinate a divalent metal cation.

It belongs to the RNase HII family. RnhC subfamily. Mn(2+) serves as cofactor. Mg(2+) is required as a cofactor.

The protein resides in the cytoplasm. It catalyses the reaction Endonucleolytic cleavage to 5'-phosphomonoester.. Functionally, endonuclease that specifically degrades the RNA of RNA-DNA hybrids. The sequence is that of Ribonuclease HIII from Geobacillus kaustophilus (strain HTA426).